A 92-amino-acid chain; its full sequence is Conotoxin Mr15.2 (92 aa).

An N-terminal signal peptide occupies residues 1 to 20 (MSTLKMMLLILLLLLPMATF). Positions 21–53 (DSDGQAIPGGGIPSAVNSRVGGDEKSGRSLEKR) are excised as a propeptide. A disordered region spans residues 30–49 (GGIPSAVNSRVGGDEKSGRS).

It belongs to the conotoxin N superfamily. Post-translationally, contains 4 disulfide bonds. As to expression, expressed by the venom duct.

It is found in the secreted. This chain is Conotoxin Mr15.2, found in Conus marmoreus (Marble cone).